The chain runs to 36 residues: Photosystem I reaction center subunit VIII (36 aa).

The chain crosses the membrane as a helical span at residues 7 to 29 (PSILVPLVGILLPAVTMASLFLY).

Belongs to the PsaI family.

The protein localises to the plastid. Its subcellular location is the chloroplast thylakoid membrane. Functionally, may help in the organization of the PsaL subunit. The sequence is that of Photosystem I reaction center subunit VIII from Adiantum capillus-veneris (Maidenhair fern).